A 313-amino-acid polypeptide reads, in one-letter code: Porphobilinogen deaminase (313 aa).

S-(dipyrrolylmethanemethyl)cysteine is present on cysteine 249.

Belongs to the HMBS family. Monomer. Requires dipyrromethane as cofactor.

The enzyme catalyses 4 porphobilinogen + H2O = hydroxymethylbilane + 4 NH4(+). The protein operates within porphyrin-containing compound metabolism; protoporphyrin-IX biosynthesis; coproporphyrinogen-III from 5-aminolevulinate: step 2/4. Its function is as follows. Tetrapolymerization of the monopyrrole PBG into the hydroxymethylbilane pre-uroporphyrinogen in several discrete steps. The sequence is that of Porphobilinogen deaminase from Paracoccus denitrificans (strain Pd 1222).